The following is a 127-amino-acid chain: Ribosome-binding factor A (127 aa).

The protein belongs to the RbfA family. Monomer. Binds 30S ribosomal subunits, but not 50S ribosomal subunits or 70S ribosomes.

It localises to the cytoplasm. Functionally, one of several proteins that assist in the late maturation steps of the functional core of the 30S ribosomal subunit. Associates with free 30S ribosomal subunits (but not with 30S subunits that are part of 70S ribosomes or polysomes). Required for efficient processing of 16S rRNA. May interact with the 5'-terminal helix region of 16S rRNA. In Glaesserella parasuis serovar 5 (strain SH0165) (Haemophilus parasuis), this protein is Ribosome-binding factor A.